Reading from the N-terminus, the 380-residue chain is Cytochrome b (380 aa).

A run of 4 helical transmembrane segments spans residues 34 to 54 (FGSL…LLAT), 78 to 99 (WLIR…YLHI), 114 to 134 (WNTG…GYVL), and 179 to 199 (FFAL…IHLT). Heme b contacts are provided by H84 and H98. Positions 183 and 197 each coordinate heme b. H202 is a binding site for a ubiquinone. The next 4 helical transmembrane spans lie at 227 to 247 (LKDI…ALFS), 289 to 309 (LGGV…PLLH), 321 to 341 (LSQL…WVGS), and 348 to 368 (FIII…LLFP).

This sequence belongs to the cytochrome b family. The cytochrome bc1 complex contains 11 subunits: 3 respiratory subunits (MT-CYB, CYC1 and UQCRFS1), 2 core proteins (UQCRC1 and UQCRC2) and 6 low-molecular weight proteins (UQCRH/QCR6, UQCRB/QCR7, UQCRQ/QCR8, UQCR10/QCR9, UQCR11/QCR10 and a cleavage product of UQCRFS1). This cytochrome bc1 complex then forms a dimer. Heme b is required as a cofactor.

It is found in the mitochondrion inner membrane. Functionally, component of the ubiquinol-cytochrome c reductase complex (complex III or cytochrome b-c1 complex) that is part of the mitochondrial respiratory chain. The b-c1 complex mediates electron transfer from ubiquinol to cytochrome c. Contributes to the generation of a proton gradient across the mitochondrial membrane that is then used for ATP synthesis. The sequence is that of Cytochrome b (MT-CYB) from Cepphus grylle (Black guillemot).